The primary structure comprises 446 residues: ATP-dependent protease ATPase subunit HslU (446 aa).

ATP contacts are provided by residues isoleucine 18, 60-65 (GVGKTE), aspartate 259, glutamate 324, and arginine 396.

The protein belongs to the ClpX chaperone family. HslU subfamily. A double ring-shaped homohexamer of HslV is capped on each side by a ring-shaped HslU homohexamer. The assembly of the HslU/HslV complex is dependent on binding of ATP.

It localises to the cytoplasm. In terms of biological role, ATPase subunit of a proteasome-like degradation complex; this subunit has chaperone activity. The binding of ATP and its subsequent hydrolysis by HslU are essential for unfolding of protein substrates subsequently hydrolyzed by HslV. HslU recognizes the N-terminal part of its protein substrates and unfolds these before they are guided to HslV for hydrolysis. This chain is ATP-dependent protease ATPase subunit HslU, found in Vibrio atlanticus (strain LGP32) (Vibrio splendidus (strain Mel32)).